Reading from the N-terminus, the 415-residue chain is MENLIEKLKKAKVSSYTLALLNTNEKNEALRAIANNIEKNIDKIIKENEKDLKRGEEKGLSKAVLDRILLNEKRLRDIIKSIDDVIKLPDPVGEIVSMQKRPNGILVGQMRVPIGVIAIIYEARPNVTVDATILALKSGNAIVLRGSSDALNSNIIITEIMKEALSNTKVPPDTVQIIESPEHSVVEELLQMVDYIDVAIPRGSAKFIKHVMNISKVPVIETGAGNNHIYVEEDADFEMARKIIINAKVQRPSVCNAIEKLLIHKNIAEEFLPIIAKDLREYNVEIRGCKRTLKILTDAIPATEEDWYTEYLDYIIAIKIVESIDEAIEHINKYNTKHSEAIITKDYYKALKFLRMVDAAAVYVNASTRFTDGGEFGLGAEIGISTQKLHARGPMGLKELTTTKYVILGEGQIRE.

Belongs to the gamma-glutamyl phosphate reductase family.

Its subcellular location is the cytoplasm. It carries out the reaction L-glutamate 5-semialdehyde + phosphate + NADP(+) = L-glutamyl 5-phosphate + NADPH + H(+). It functions in the pathway amino-acid biosynthesis; L-proline biosynthesis; L-glutamate 5-semialdehyde from L-glutamate: step 2/2. Its function is as follows. Catalyzes the NADPH-dependent reduction of L-glutamate 5-phosphate into L-glutamate 5-semialdehyde and phosphate. The product spontaneously undergoes cyclization to form 1-pyrroline-5-carboxylate. The polypeptide is Gamma-glutamyl phosphate reductase (Dictyoglomus turgidum (strain DSM 6724 / Z-1310)).